The chain runs to 170 residues: Glycine cleavage system H protein, mitochondrial (170 aa).

Residues 1-47 (MLRTTRLWTTRMPTVSKLFLRNSSGNALNKNKLPFLYSSQGPQAVRY) constitute a mitochondrion transit peptide. One can recognise a Lipoyl-binding domain in the interval 61–143 (TAFVGITKYA…MGDGWLVKMK (83 aa)). Position 102 is an N6-lipoyllysine (Lys102).

Belongs to the GcvH family. Component of the glycine decarboxylase complex (GDC), which is composed of four proteins: P, T, L and H. (R)-lipoate is required as a cofactor.

It is found in the mitochondrion. Functionally, the glycine cleavage system (glycine decarboxylase complex) catalyzes the degradation of glycine. The H protein shuttles the methylamine group of glycine from the P protein to the T protein. The protein is Glycine cleavage system H protein, mitochondrial (GCV3) of Saccharomyces cerevisiae (strain ATCC 204508 / S288c) (Baker's yeast).